Reading from the N-terminus, the 380-residue chain is Growth-regulating factor 4 (380 aa).

A disordered region spans residues 1–21 (MDLQLKQWRSQQQNESEEQGS). Residues 82–117 (FFSWAQWQELELQALIYRYMLAGASVPQELLLPIKK) form the QLQ domain. The 45-residue stretch at 151–195 (DPEPGRCKRTDGKKWRCSRDVVAGHKYCDRHIHRGRNRSRKPVET) folds into the WRC domain. 2 short sequence motifs (bipartite nuclear localization signal) span residues 156–166 (RCKRTDGKKWR) and 184–191 (RGRNRSRK). Disordered stretches follow at residues 222–270 (NNNH…GRSD) and 284–330 (RSSD…NMRN). Low complexity-rich tracts occupy residues 228-245 (SSGS…SCSS) and 285-296 (SSDSTSSPMSSS). Residues 297–320 (TCHLSISMPGNNTSSDVSLKLSTG) are compositionally biased toward polar residues.

It belongs to the GRF family. In terms of tissue distribution, strongly expressed in actively growing and developing tissues, such as roots, upper stems, and shoot tips containing the shoot apical meristem (SAM) and flower buds. Also expressed in mature flowers, but weakly expressed in mature stems and leaves.

It is found in the nucleus. Functionally, transcription activator that plays a role in the regulation of cell expansion in leaf and cotyledons tissues. Component of a network formed by miR396, the GRFs and their interacting factors (GIFs) acting in the regulation of meristem function, at least partially through the control of cell proliferation. The chain is Growth-regulating factor 4 (GRF4) from Arabidopsis thaliana (Mouse-ear cress).